We begin with the raw amino-acid sequence, 520 residues long: O-methyltransferase cicE (520 aa).

S-adenosyl-L-methionine-binding positions include 300–301, D323, 355–356, and R371; these read GG and NF.

This sequence belongs to the class I-like SAM-binding methyltransferase superfamily. Cation-independent O-methyltransferase family.

It participates in phytotoxin biosynthesis. O-methyltransferase; part of the gene cluster that mediates the biosynthesis of cichorine, a phytotoxin active against knapweed, corn, and soybeans. The first step in the pathway is performed by the non-reducing polyketide synthase pkbA that condenses one acetyl-CoA starter unit with 3 malonyl-CoA units. PkbA also catalyzes one methylation step to produce 3-methylorsellinate. The nonribosomal peptide synthase-like protein cicB, the cytochrome P450 monooxygenase cicH and the O-methyltransferase cicE are involved in the conversion of 3-methylorsellinate into nidulol. CicB converts 3-methylorsellinate to a yet unidentified intermediate, cicH may play a ring-closing role for cichorine and cicE is plausibly responsible for the methylation of one of the phenol groups. The oxidoreductase cicC acts downstream with still unidentified enzymes to further convert nidulol into cichorine. This Emericella nidulans (strain FGSC A4 / ATCC 38163 / CBS 112.46 / NRRL 194 / M139) (Aspergillus nidulans) protein is O-methyltransferase cicE.